The chain runs to 471 residues: MTKLIKNGTIVTATDIYEADLLIQDGKIAVIGRNLDESGAEVIDATGCYVFPGGIDPHTHLDMPFGGTVTKDDFESGTIAAAFGGTTTIIDFCLTNKGEPLKKAIETWHNKATGKAVIDYGFHLMISEITDDVLEELPKVIEEEGITSFKVFMAYKDVFQADDGTLYRTLVAAKELGALVMVHAENGDVIDYLTKKALEDGHTDPIYHALTRPPELEGEATGRACQLTELAGSQLYVVHVSCAQAVEKIAEARNKGLNVWGETCPQYLVLDQSYLEKPNFEGAKYVWSPPLREKWHQEVLWNALKNGQLQTLGSDQCSFDFKGQKELGRGDFTKIPNGGPIIEDRVSILFSEGVKKGRITLNQFVDIVSTRIAKLFGLFPKKGTIAVGADADLVIFDPTVERVISAETHHMAVDYNPFEGMKVTGEPVSVLCRGEFVVRDKQFVGKPGYGQYVKRAKYGALMADQDVVKMS.

Residues His-58, His-60, and Lys-150 each coordinate Zn(2+). Position 150 is an N6-carboxylysine (Lys-150). Tyr-155 contributes to the substrate binding site. Residues His-183 and His-239 each contribute to the Zn(2+) site. Ser-288 contacts substrate. Residue Asp-315 participates in Zn(2+) binding. Residue Asn-337 participates in substrate binding.

Belongs to the metallo-dependent hydrolases superfamily. Hydantoinase/dihydropyrimidinase family. As to quaternary structure, homotetramer. Zn(2+) serves as cofactor. Requires Ni(2+) as cofactor. The cofactor is Co(2+). It depends on Mn(2+) as a cofactor. In terms of processing, carboxylation allows a single lysine to coordinate two zinc ions.

With respect to regulation, completely inhibited by p-chloromercuribenzoate and partially inhibited by metal chelating agents. Its function is as follows. Catalyzes the stereospecific hydrolysis of the cyclic amide bond of D-hydantoin. Has no activity on dihydropyrimidines. The protein is D-hydantoinase of Geobacillus stearothermophilus (Bacillus stearothermophilus).